The following is a 625-amino-acid chain: Interferon-induced GTP-binding protein MxE (625 aa).

Positions 40 to 313 (DLNLPAIAVI…LVEHIAKNLP (274 aa)) constitute a Dynamin-type G domain. The G1 motif stretch occupies residues 50–57 (GDQSSGKS). Residue 50–57 (GDQSSGKS) participates in GTP binding. The interval 75-77 (VTR) is G2 motif. The interval 151-154 (DLPG) is G3 motif. GTP-binding positions include 151–155 (DLPGI) and 220–223 (TKPD). Positions 220 to 223 (TKPD) are G4 motif. A G5 motif region spans residues 252 to 255 (KCRG). In terms of domain architecture, GED spans 536-625 (VREMAYHLTS…RVLSKFVHSA (90 aa)).

Belongs to the TRAFAC class dynamin-like GTPase superfamily. Dynamin/Fzo/YdjA family.

The protein resides in the cytoplasm. This is Interferon-induced GTP-binding protein MxE (mxe) from Danio rerio (Zebrafish).